The primary structure comprises 200 residues: 3-isopropylmalate dehydratase small subunit (200 aa).

It belongs to the LeuD family. LeuD type 1 subfamily. As to quaternary structure, heterodimer of LeuC and LeuD.

The catalysed reaction is (2R,3S)-3-isopropylmalate = (2S)-2-isopropylmalate. Its pathway is amino-acid biosynthesis; L-leucine biosynthesis; L-leucine from 3-methyl-2-oxobutanoate: step 2/4. Catalyzes the isomerization between 2-isopropylmalate and 3-isopropylmalate, via the formation of 2-isopropylmaleate. The protein is 3-isopropylmalate dehydratase small subunit of Haemophilus influenzae (strain PittEE).